The following is a 1532-amino-acid chain: IgA-specific serine endopeptidase autotransporter (1532 aa).

The signal sequence occupies residues Met1–Ala27. In terms of domain architecture, Peptidase S6 spans Ala28–Lys322. Ser278 is an active-site residue. 2 disordered regions span residues Gly979 to Ser1136 and Leu1166 to Leu1217. The segment covering Ala989–Gly1004 has biased composition (polar residues). The segment covering Glu1045 to Ser1101 has biased composition (basic and acidic residues). The segment covering Lys1107–Ile1116 has biased composition (basic residues). Positions Ser1207 to Leu1217 are enriched in basic and acidic residues. Residues Ala1280–Phe1532 enclose the Autotransporter domain.

Its subcellular location is the periplasm. It localises to the secreted. The protein localises to the cell surface. The protein resides in the cell outer membrane. The enzyme catalyses Cleavage of immunoglobulin A molecules at certain Pro-|-Xaa bonds in the hinge region. No small molecule substrates are known.. Functionally, this protease is specific for immunoglobulin A. This is IgA-specific serine endopeptidase autotransporter (iga) from Neisseria gonorrhoeae.